A 192-amino-acid polypeptide reads, in one-letter code: CASP-like protein 2U1 (192 aa).

Over 1–11 (MASRKQGAREG) the chain is Cytoplasmic. Residues 12–32 (LWSMGVRLLTTLLCITSLILL) form a helical membrane-spanning segment. Topologically, residues 33-58 (LKAKQTVRRALGLGYIAQTVKYSDTS) are extracellular. The helical transmembrane segment at 59-79 (GFIYLVYINILVAAYGLIVFV) threads the bilayer. At 80-96 (SLIPSALGKSCSGKCSR) the chain is on the cytoplasmic side. Residues 97 to 117 (WTIFVLDQVFAYVLLSAVSAA) form a helical membrane-spanning segment. Over 118-145 (TEVLYLADKGMSKTQWEALCPTYGFFCH) the chain is Extracellular. A helical membrane pass occupies residues 146–166 (MVSASVAIGSVAVVLLAVLSV). Residues 167–192 (SSAQSLFHNFYTRALYTTKMRHSSLT) are Cytoplasmic-facing.

This sequence belongs to the Casparian strip membrane proteins (CASP) family. In terms of assembly, homodimer and heterodimers.

The protein resides in the cell membrane. The protein is CASP-like protein 2U1 of Adiantum capillus-veneris (Maidenhair fern).